Reading from the N-terminus, the 407-residue chain is Peptidase T (407 aa).

His82 contacts Zn(2+). Residue Asp84 is part of the active site. Asp143 lines the Zn(2+) pocket. Glu177 functions as the Proton acceptor in the catalytic mechanism. Positions 178, 200, and 382 each coordinate Zn(2+).

Belongs to the peptidase M20B family. It depends on Zn(2+) as a cofactor.

The protein resides in the cytoplasm. The catalysed reaction is Release of the N-terminal residue from a tripeptide.. Cleaves the N-terminal amino acid of tripeptides. This is Peptidase T from Streptococcus pyogenes serotype M2 (strain MGAS10270).